Reading from the N-terminus, the 740-residue chain is Anaphase-promoting complex subunit 5 (740 aa).

Ser-180 is modified (phosphoserine). 13 TPR repeats span residues 194–234, 235–285, 286–322, 323–363, 364–403, 404–451, 452–485, 486–525, 526–565, 566–605, 606–645, 646–681, and 682–721; these read QKQA…FNPD, FAEA…GRSL, RYAALNLAALHCRFGHYQQAELALQEAIRIAQESNDH, VCLQ…YLAS, LGIQSLVQQRAFAGKTANKLMDALKDSDLLHWKHSLSELI, DISI…TESF, AVALCHLAELHAEQGCFAAAGEVLKHLKDRFPPN, SQHAQLWMLCDQKIQFDRAMNDGKFHLADSLVTGITALNG, IEGVYRKAVVLQAQNQMTEAHKLLQKLLTYCQKLKNTEMV, ISVLLSVAELYWRSSSPTIAMPVLLEALALSKEYRLQYLA, SETVLNLAYAQLILGIPEQALTLLHMAIEPILADGAVLDK, GRAMFLVSKCQVASAASYDPVKKAEALEAAIQNLSE, and AKNYFAQVDCRERIRDVAYFQARLYHALGKTQERNHCAMI. Thr-217 is modified (phosphothreonine).

It belongs to the APC5 family. In terms of assembly, the mammalian APC/C is composed at least of 14 distinct subunits ANAPC1, ANAPC2, CDC27/APC3, ANAPC4, ANAPC5, CDC16/APC6, ANAPC7, CDC23/APC8, ANAPC10, ANAPC11, CDC26/APC12, ANAPC13, ANAPC15 and ANAPC16 that assemble into a complex of at least 19 chains with a combined molecular mass of around 1.2 MDa; APC/C interacts with FZR1 and FBXO5.

It is found in the nucleus. Its subcellular location is the cytoplasm. The protein localises to the cytoskeleton. The protein resides in the spindle. Its pathway is protein modification; protein ubiquitination. Component of the anaphase promoting complex/cyclosome (APC/C), a cell cycle-regulated E3 ubiquitin ligase that controls progression through mitosis and the G1 phase of the cell cycle. The APC/C complex acts by mediating ubiquitination and subsequent degradation of target proteins: it mainly mediates the formation of 'Lys-11'-linked polyubiquitin chains and, to a lower extent, the formation of 'Lys-48'- and 'Lys-63'-linked polyubiquitin chains. The APC/C complex catalyzes assembly of branched 'Lys-11'-/'Lys-48'-linked branched ubiquitin chains on target proteins. The protein is Anaphase-promoting complex subunit 5 (Anapc5) of Mus musculus (Mouse).